Reading from the N-terminus, the 159-residue chain is Ribosomal RNA large subunit methyltransferase H (159 aa).

S-adenosyl-L-methionine-binding positions include L76, G108, and 127-132 (LSDMTF).

This sequence belongs to the RNA methyltransferase RlmH family. In terms of assembly, homodimer.

It localises to the cytoplasm. The enzyme catalyses pseudouridine(1915) in 23S rRNA + S-adenosyl-L-methionine = N(3)-methylpseudouridine(1915) in 23S rRNA + S-adenosyl-L-homocysteine + H(+). Its function is as follows. Specifically methylates the pseudouridine at position 1915 (m3Psi1915) in 23S rRNA. In Acetivibrio thermocellus (strain ATCC 27405 / DSM 1237 / JCM 9322 / NBRC 103400 / NCIMB 10682 / NRRL B-4536 / VPI 7372) (Clostridium thermocellum), this protein is Ribosomal RNA large subunit methyltransferase H.